We begin with the raw amino-acid sequence, 181 residues long: NAD(P)H-quinone oxidoreductase subunit 6, chloroplastic (181 aa).

The next 5 membrane-spanning stretches (helical) occupy residues 10–30, 33–53, 62–82, 98–118, and 153–173; these read TLLF…VVLL, VIYS…LYLL, AQVL…IMLV, IISA…IFTT, and LFPF…AITI.

It belongs to the complex I subunit 6 family. NDH is composed of at least 16 different subunits, 5 of which are encoded in the nucleus.

It localises to the plastid. The protein resides in the chloroplast thylakoid membrane. The enzyme catalyses a plastoquinone + NADH + (n+1) H(+)(in) = a plastoquinol + NAD(+) + n H(+)(out). It catalyses the reaction a plastoquinone + NADPH + (n+1) H(+)(in) = a plastoquinol + NADP(+) + n H(+)(out). Functionally, NDH shuttles electrons from NAD(P)H:plastoquinone, via FMN and iron-sulfur (Fe-S) centers, to quinones in the photosynthetic chain and possibly in a chloroplast respiratory chain. The immediate electron acceptor for the enzyme in this species is believed to be plastoquinone. Couples the redox reaction to proton translocation, and thus conserves the redox energy in a proton gradient. In Zygnema circumcarinatum (Green alga), this protein is NAD(P)H-quinone oxidoreductase subunit 6, chloroplastic (ndhG).